Consider the following 346-residue polypeptide: MDFLTKHLDCLSNWQLNLQPGWQTVGASALLAAGSLFVVSRALVFVRVLLSLFVLPGKPLRSFGPKGSWAVVTGASDGLGKEFALQLARADFNILLVSRTASKLDTLSNEITTKFPSVQTKTLAMDFARNQDSDYEKLKELVDELDVSVLVNNVGKSHSIPTPFALTPEDEMTDIVTINCLGTLRATQLVVPGMMQRKRGLVLTMGSFGGLLPTPLLATYSGSKAFLQQWSTSLGSELEPYGITVELVQAYLITSAMSKIRRTSATIPDPRSFVKSVLTKIGRNGGSPTYAYSSSPYWSHGLMAWFLTCVTGTMGKIVVSQNKGMHESIRKRALRKAEREKGKKST.

Residues 26–46 traverse the membrane as a helical segment; the sequence is GASALLAAGSLFVVSRALVFV. The NADP(+) site is built by Val71, Asp126, Asp134, Asn153, Tyr220, Lys224, Ile253, and Ser255. Catalysis depends on Tyr220, which acts as the Proton donor. Residue Lys224 is the Lowers pKa of active site Tyr of the active site.

The protein belongs to the short-chain dehydrogenases/reductases (SDR) family.

The protein localises to the endoplasmic reticulum membrane. It catalyses the reaction a very-long-chain (3R)-3-hydroxyacyl-CoA + NADP(+) = a very-long-chain 3-oxoacyl-CoA + NADPH + H(+). Its pathway is lipid metabolism; fatty acid biosynthesis. Its function is as follows. Component of the microsomal membrane bound fatty acid elongation system, which produces the 26-carbon very long-chain fatty acids (VLCFA) from palmitate. Catalyzes the reduction of the 3-ketoacyl-CoA intermediate that is formed in each cycle of fatty acid elongation. VLCFAs serve as precursors for ceramide and sphingolipids. This Aspergillus niger (strain ATCC MYA-4892 / CBS 513.88 / FGSC A1513) protein is Very-long-chain 3-oxoacyl-CoA reductase.